The following is a 165-amino-acid chain: UPF0254 protein MmarC7_0182 (165 aa).

It belongs to the UPF0254 family.

The polypeptide is UPF0254 protein MmarC7_0182 (Methanococcus maripaludis (strain C7 / ATCC BAA-1331)).